Consider the following 423-residue polypeptide: MTDKGKNDLTSKAKDKARGNPEKPPYWFEIIVSDPQKRTGDPGSSSGYVSYQISTKTNNTSFYDNRGDPESIIVVHRRYSDLLLLHDILLNRFPTCIIPPLPDKKVFQYIAGDRFSQRFTQKRCHSLQNFLRRVSLHPDLSQSKVFKTFLVSKDWESHRKVLQDSLQPNKDEVTDAFMNAFKTVHKQNEEFTEIREKSDKLDRTVTKIDKLFHKVVKKNDSMSEDYTKLGSNLQELQELVTGENEELAAKLKIFNEGVTQLSYGLQDLTKYLDYEYIVDLKDLEHYIDSMRQLIKLKDQKQIDYEELSDYLTRSIKEKNNLISGYGGSNFFANKLEELAGINQEASRREKINKLEGKITSLTGELENAKKVADGFEQECLKEIDHFESVKTAEIKKSLGSLADHHIEFYERILEAWEKVDDSL.

The span at 1-21 shows a compositional bias: basic and acidic residues; sequence MTDKGKNDLTSKAKDKARGNP. The segment at 1–25 is disordered; the sequence is MTDKGKNDLTSKAKDKARGNPEKPP. In terms of domain architecture, PX spans 29 to 157; sequence EIIVSDPQKR…TFLVSKDWES (129 aa). Residues R78, S80, K104, and R123 each contribute to the a 1,2-diacyl-sn-glycero-3-phospho-(1D-myo-inositol-3-phosphate) site. 2 coiled-coil regions span residues 217-252 and 346-381; these read KKNDSMSEDYTKLGSNLQELQELVTGENEELAAKLK and SRREKINKLEGKITSLTGELENAKKVADGFEQECLK.

The protein belongs to the sorting nexin family. As to quaternary structure, forms a complex with ATG20 and ATG17. Binds also to SNC1 and SNX41.

Its subcellular location is the cytoplasm. The protein resides in the cytosol. The protein localises to the preautophagosomal structure membrane. It is found in the endosome membrane. Its function is as follows. Sorting nexin, involved in the separation or division of vacuoles throughout the entire life cycle of the cells. Involved in retrieval of late-Golgi SNAREs from post-Golgi endosomes to the trans-Golgi network, for cytoplasm to vacuole transport (Cvt), and autophagy of large cargos including mitophagy, pexophagy and glycophagy. Involved in proper sorting of the v-SNARE protein SNC1. This is Sorting nexin-4 from Saccharomyces cerevisiae (strain ATCC 204508 / S288c) (Baker's yeast).